Consider the following 504-residue polypeptide: Maturase K (504 aa).

The protein belongs to the intron maturase 2 family. MatK subfamily.

The protein localises to the plastid. It localises to the chloroplast. Its function is as follows. Usually encoded in the trnK tRNA gene intron. Probably assists in splicing its own and other chloroplast group II introns. This Capsella bursa-pastoris (Shepherd's purse) protein is Maturase K.